Here is a 267-residue protein sequence, read N- to C-terminus: tRNA pseudouridine synthase A (267 aa).

Catalysis depends on aspartate 53, which acts as the Nucleophile. Residue tyrosine 114 participates in substrate binding.

Belongs to the tRNA pseudouridine synthase TruA family. Homodimer.

It carries out the reaction uridine(38/39/40) in tRNA = pseudouridine(38/39/40) in tRNA. Its function is as follows. Formation of pseudouridine at positions 38, 39 and 40 in the anticodon stem and loop of transfer RNAs. This chain is tRNA pseudouridine synthase A, found in Chlamydia trachomatis serovar A (strain ATCC VR-571B / DSM 19440 / HAR-13).